The following is a 569-amino-acid chain: Glutamyl-tRNA reductase (569 aa).

Substrate contacts are provided by residues 49–52, Ser-109, 114–116, and Gln-120; these read TCNR and EGQ. The Nucleophile role is filled by Cys-50. 192-197 serves as a coordination point for NADP(+); sequence GAGSMS. Positions 284-397 are insert; it reads PVAVREETPA…VEAPRPAPAL (114 aa). The disordered stretch occupies residues 546-569; the sequence is AAVSRADDRDTSDSTENAKNRGRE. Over residues 550–569 the composition is skewed to basic and acidic residues; sequence RADDRDTSDSTENAKNRGRE.

This sequence belongs to the glutamyl-tRNA reductase family. In terms of assembly, homodimer.

It catalyses the reaction (S)-4-amino-5-oxopentanoate + tRNA(Glu) + NADP(+) = L-glutamyl-tRNA(Glu) + NADPH + H(+). It participates in porphyrin-containing compound metabolism; protoporphyrin-IX biosynthesis; 5-aminolevulinate from L-glutamyl-tRNA(Glu): step 1/2. Catalyzes the NADPH-dependent reduction of glutamyl-tRNA(Glu) to glutamate 1-semialdehyde (GSA). The polypeptide is Glutamyl-tRNA reductase (Streptomyces avermitilis (strain ATCC 31267 / DSM 46492 / JCM 5070 / NBRC 14893 / NCIMB 12804 / NRRL 8165 / MA-4680)).